The following is a 1007-amino-acid chain: Ephrin type-A receptor 10 (1007 aa).

The N-terminal stretch at 1–22 is a signal peptide; sequence METGAGPHPLRLFVCLIPLCLA. Residues 23 to 565 are Extracellular-facing; that stretch reads LLLGPGRPGT…APGSRDQSPA (543 aa). An Eph LBD domain is found at 35 to 216; it reads EVILLDSKAS…YYKQCRATVR (182 aa). N311 carries an N-linked (GlcNAc...) asparagine glycan. Disordered stretches follow at residues 323–343 and 467–486; these read ARSPTDPPSASCTRPPSAPRD and PQSVSLSWREPVPAGAPGTN. Fibronectin type-III domains lie at 340–452 and 456–554; these read APRD…TGPG and EEDE…TPGE. N-linked (GlcNAc...) asparagine glycosylation occurs at N486. Residues 566–586 form a helical membrane-spanning segment; that stretch reads VVVTVVTISALLVLGSVMSVL. At 587 to 1007 the chain is on the cytoplasmic side; that stretch reads AIWRRPCDGK…LQLQGQGVQV (421 aa). In terms of domain architecture, Protein kinase spans 644 to 899; that stretch reads VTLEKSLGAG…PRFSQIHSIL (256 aa). In terms of domain architecture, SAM spans 932–996; it reads PSFGSVGAWL…LSGISALQTR (65 aa).

It belongs to the protein kinase superfamily. Tyr protein kinase family. Ephrin receptor subfamily. As to expression, expressed in the cochlea, in the organ of Corti, spiral ganglion, and stria vascularis.

The protein localises to the cell membrane. The catalysed reaction is L-tyrosyl-[protein] + ATP = O-phospho-L-tyrosyl-[protein] + ADP + H(+). Its function is as follows. Receptor for members of the ephrin-A family. Binds to EFNA3, EFNA4 and EFNA5. The polypeptide is Ephrin type-A receptor 10 (Epha10) (Mus musculus (Mouse)).